We begin with the raw amino-acid sequence, 248 residues long: MAGHSQFANIKHRKGAQDAKRAQKFTKLIREIIVAAKQGLPDPEFNSRLRSAIIAAKKENLPKDRIDAAIKSATGNTQTDNYEEVVYEGYGPGNIALMIQTLTNNRNRTAAELRHALSKYNGKLGESGSVSFLFNHVGVIAYKASSIDSFDSLFNTAIELHALDVEEIIQDDTQEKIYYVICNVQDFGNVRDQLFHKFSDAEFSRLFWKASDTVKIEDEEIQKKISNLMDLLENNDDVQYIDSNFTFY.

Residues 1–21 form a disordered region; the sequence is MAGHSQFANIKHRKGAQDAKR.

It belongs to the TACO1 family.

It is found in the cytoplasm. The chain is Probable transcriptional regulatory protein ECH_0704 from Ehrlichia chaffeensis (strain ATCC CRL-10679 / Arkansas).